A 176-amino-acid polypeptide reads, in one-letter code: SsrA-binding protein (176 aa).

The disordered stretch occupies residues 1–33 (MTEAGAKKAAGKKSGKGKGKNAKKNQPNITPVA). Over residues 9–23 (AAGKKSGKGKGKNAK) the composition is skewed to basic residues.

It belongs to the SmpB family.

The protein localises to the cytoplasm. In terms of biological role, required for rescue of stalled ribosomes mediated by trans-translation. Binds to transfer-messenger RNA (tmRNA), required for stable association of tmRNA with ribosomes. tmRNA and SmpB together mimic tRNA shape, replacing the anticodon stem-loop with SmpB. tmRNA is encoded by the ssrA gene; the 2 termini fold to resemble tRNA(Ala) and it encodes a 'tag peptide', a short internal open reading frame. During trans-translation Ala-aminoacylated tmRNA acts like a tRNA, entering the A-site of stalled ribosomes, displacing the stalled mRNA. The ribosome then switches to translate the ORF on the tmRNA; the nascent peptide is terminated with the 'tag peptide' encoded by the tmRNA and targeted for degradation. The ribosome is freed to recommence translation, which seems to be the essential function of trans-translation. This is SsrA-binding protein from Rhodopirellula baltica (strain DSM 10527 / NCIMB 13988 / SH1).